The primary structure comprises 92 residues: Small ribosomal subunit protein bS18 (92 aa).

Belongs to the bacterial ribosomal protein bS18 family. As to quaternary structure, part of the 30S ribosomal subunit. Forms a tight heterodimer with protein bS6.

Binds as a heterodimer with protein bS6 to the central domain of the 16S rRNA, where it helps stabilize the platform of the 30S subunit. The chain is Small ribosomal subunit protein bS18 from Cupriavidus necator (strain ATCC 17699 / DSM 428 / KCTC 22496 / NCIMB 10442 / H16 / Stanier 337) (Ralstonia eutropha).